The chain runs to 127 residues: Large ribosomal subunit protein bL17 (127 aa).

The protein belongs to the bacterial ribosomal protein bL17 family. As to quaternary structure, part of the 50S ribosomal subunit. Contacts protein L32.

The polypeptide is Large ribosomal subunit protein bL17 (Xanthomonas axonopodis pv. citri (strain 306)).